We begin with the raw amino-acid sequence, 265 residues long: Thiazole synthase (265 aa).

The Schiff-base intermediate with DXP role is filled by lysine 106. Residues glycine 167, 193–194, and 215–216 contribute to the 1-deoxy-D-xylulose 5-phosphate site; these read AG and NT. A disordered region spans residues 245–265; sequence GRIPRRARAEPSSPQLGLVGS.

The protein belongs to the ThiG family. As to quaternary structure, homotetramer. Forms heterodimers with either ThiH or ThiS.

Its subcellular location is the cytoplasm. It carries out the reaction [ThiS sulfur-carrier protein]-C-terminal-Gly-aminoethanethioate + 2-iminoacetate + 1-deoxy-D-xylulose 5-phosphate = [ThiS sulfur-carrier protein]-C-terminal Gly-Gly + 2-[(2R,5Z)-2-carboxy-4-methylthiazol-5(2H)-ylidene]ethyl phosphate + 2 H2O + H(+). The protein operates within cofactor biosynthesis; thiamine diphosphate biosynthesis. Catalyzes the rearrangement of 1-deoxy-D-xylulose 5-phosphate (DXP) to produce the thiazole phosphate moiety of thiamine. Sulfur is provided by the thiocarboxylate moiety of the carrier protein ThiS. In vitro, sulfur can be provided by H(2)S. This Methylobacterium sp. (strain 4-46) protein is Thiazole synthase.